The sequence spans 500 residues: NAD(P)H-quinone oxidoreductase subunit 2, chloroplastic (500 aa).

The next 13 helical transmembrane spans lie at 15–35 (ILPESILIFCLLTTLIIDLSL), 42–62 (WIIYLNTIGLILSGLFLCLQW), 79–99 (FSIAFRFCIIIASLLSLLLSI), 109–129 (LMEFVIFLLGATIGGMFLCGA), 132–152 (LITIFTSLECLGLSSYLLAGY), 167–187 (LLVGGASSAILAYGFSWLYGL), 201–221 (LIFADFVNPLIKWITLTCIIV), 247–267 (VVAFLSVASKTAGLALTIRII), 278–298 (WQFLLQILACLTMIVGNLVAI), 306–326 (MLAYSSISQAGYLMIGIISST), 334–354 (LVYMLIYIFMNLGAFGCVILF), 377–397 (ASCLTIFLLSLGGIPPFAGFF), and 400–420 (IYLFWSGWQAGLYILTFVGLL).

It belongs to the complex I subunit 2 family. As to quaternary structure, NDH is composed of at least 16 different subunits, 5 of which are encoded in the nucleus.

Its subcellular location is the plastid. It localises to the chloroplast thylakoid membrane. The enzyme catalyses a plastoquinone + NADH + (n+1) H(+)(in) = a plastoquinol + NAD(+) + n H(+)(out). It carries out the reaction a plastoquinone + NADPH + (n+1) H(+)(in) = a plastoquinol + NADP(+) + n H(+)(out). NDH shuttles electrons from NAD(P)H:plastoquinone, via FMN and iron-sulfur (Fe-S) centers, to quinones in the photosynthetic chain and possibly in a chloroplast respiratory chain. The immediate electron acceptor for the enzyme in this species is believed to be plastoquinone. Couples the redox reaction to proton translocation, and thus conserves the redox energy in a proton gradient. The sequence is that of NAD(P)H-quinone oxidoreductase subunit 2, chloroplastic from Chaetosphaeridium globosum (Charophycean green alga).